The chain runs to 120 residues: Ribonuclease P protein component (120 aa).

This sequence belongs to the RnpA family. Consists of a catalytic RNA component (M1 or rnpB) and a protein subunit.

The catalysed reaction is Endonucleolytic cleavage of RNA, removing 5'-extranucleotides from tRNA precursor.. RNaseP catalyzes the removal of the 5'-leader sequence from pre-tRNA to produce the mature 5'-terminus. It can also cleave other RNA substrates such as 4.5S RNA. The protein component plays an auxiliary but essential role in vivo by binding to the 5'-leader sequence and broadening the substrate specificity of the ribozyme. This Chelativorans sp. (strain BNC1) protein is Ribonuclease P protein component.